The sequence spans 77 residues: Translation initiation factor IF-1, chloroplastic (77 aa).

In terms of domain architecture, S1-like spans 1-71 (MKEQKLIHEG…TRGRIIYRLR (71 aa)).

It belongs to the IF-1 family. In terms of assembly, component of the 30S ribosomal translation pre-initiation complex which assembles on the 30S ribosome in the order IF-2 and IF-3, IF-1 and N-formylmethionyl-tRNA(fMet); mRNA recruitment can occur at any time during PIC assembly.

It is found in the plastid. The protein localises to the chloroplast. In terms of biological role, one of the essential components for the initiation of protein synthesis. Stabilizes the binding of IF-2 and IF-3 on the 30S subunit to which N-formylmethionyl-tRNA(fMet) subsequently binds. Helps modulate mRNA selection, yielding the 30S pre-initiation complex (PIC). Upon addition of the 50S ribosomal subunit IF-1, IF-2 and IF-3 are released leaving the mature 70S translation initiation complex. In Ceratophyllum demersum (Rigid hornwort), this protein is Translation initiation factor IF-1, chloroplastic.